The primary structure comprises 455 residues: Protein chibby homolog 2 (455 aa).

A phosphoserine mark is found at Ser-41, Ser-86, Ser-89, Ser-97, Ser-124, Ser-144, Ser-148, and Ser-150. Residues 160–197 are a coiled coil; sequence KRLAKECLLQENKTLREENRALREENRMLRKENKILQV. 2 positions are modified to phosphoserine: Ser-211 and Ser-225. A coiled-coil region spans residues 240-266; it reads GRENSTLQLLREENRALQQLLEQRKAY. Positions 267-318 are disordered; sequence WAQPDEKAASTEEIKPISSPHEEPHGLLPDPGPGLPSPFEEPKGLPAPPDDS. Residues 270–291 show a composition bias toward basic and acidic residues; that stretch reads PDEKAASTEEIKPISSPHEEPH. Residues Ser-276 and Ser-332 each carry the phosphoserine modification. Positions 350–421 form a coiled coil; it reads SQSLELLREM…KLKLQQKLVI (72 aa).

This sequence belongs to the chibby family. SPERT subfamily. In terms of assembly, homodimer. Binds to NEK1.

In Bos taurus (Bovine), this protein is Protein chibby homolog 2 (CBY2).